Here is a 527-residue protein sequence, read N- to C-terminus: Bacillolysin (527 aa).

The first 28 residues, M1 to A28, serve as a signal peptide directing secretion. Residues K29–H223 constitute a propeptide, activation peptide. Ca(2+) contacts are provided by D276, D278, and D354. Position 358 (H358) interacts with Zn(2+). E359 is an active-site residue. Zn(2+)-binding residues include H362 and E382. The Ca(2+) site is built by D393, N394, D396, E401, Y404, T405, and D411. Catalysis depends on H442, which acts as the Proton donor.

Belongs to the peptidase M4 family. Ca(2+) serves as cofactor. The cofactor is Zn(2+).

Its subcellular location is the secreted. The catalysed reaction is Similar, but not identical, to that of thermolysin.. Extracellular zinc metalloprotease. In Brevibacillus brevis (Bacillus brevis), this protein is Bacillolysin (npr).